The sequence spans 541 residues: Glucose-6-phosphate isomerase (541 aa).

The Proton donor role is filled by glutamate 346. Active-site residues include histidine 377 and lysine 506.

It belongs to the GPI family.

The protein resides in the cytoplasm. It carries out the reaction alpha-D-glucose 6-phosphate = beta-D-fructose 6-phosphate. It functions in the pathway carbohydrate biosynthesis; gluconeogenesis. The protein operates within carbohydrate degradation; glycolysis; D-glyceraldehyde 3-phosphate and glycerone phosphate from D-glucose: step 2/4. Catalyzes the reversible isomerization of glucose-6-phosphate to fructose-6-phosphate. The polypeptide is Glucose-6-phosphate isomerase (Rhizobium johnstonii (strain DSM 114642 / LMG 32736 / 3841) (Rhizobium leguminosarum bv. viciae)).